We begin with the raw amino-acid sequence, 28 residues long: Conotoxin Vi14b (28 aa).

2 disulfides stabilise this stretch: cysteine 4-cysteine 21 and cysteine 7-cysteine 18. Lysine 15 and lysine 25 each carry N6-acetyllysine.

Post-translationally, the two N6-acetyllysines at position 15 and 25 have been deduced from the mass difference of 42. They are not common in venom proteins. In terms of tissue distribution, expressed by the venom gland.

The protein localises to the secreted. In terms of biological role, in vitro, inhibits proliferation of the mice ovarian cancer cells ID8. This Conus virgo (Virgin cone) protein is Conotoxin Vi14b.